A 224-amino-acid chain; its full sequence is Processed variable antigen (224 aa).

17 repeat units span residues 1–6, 7–12, 13–18, 19–24, 25–30, 31–36, 37–42, 43–48, 49–54, 55–60, 61–66, 67–72, 73–78, 79–84, 85–90, 91–96, and 97–102. The interval 1-102 is 17 X 6 AA tandem repeats of E-T-G-E-S-K; the sequence is ETGESKETGE…GESKETGESK (102 aa). Positions 1–137 are enriched in basic and acidic residues; that stretch reads ETGESKETGE…TEESKDREGN (137 aa). Positions 1–224 are disordered; it reads ETGESKETGE…KKADNKKKKK (224 aa). The span at 144–153 shows a compositional bias: low complexity; sequence ENSENSNVTS. Composition is skewed to basic and acidic residues over residues 156–173 and 185–217; these read EETKKLAEKEENEGEKLG and EDPKKLTEQEENGTKESSEETKDDKPEENEKKA.

In Plasmodium falciparum, this protein is Processed variable antigen.